The chain runs to 406 residues: Succinylornithine transaminase (406 aa).

K252 bears the N6-(pyridoxal phosphate)lysine mark.

It belongs to the class-III pyridoxal-phosphate-dependent aminotransferase family. AstC subfamily. Requires pyridoxal 5'-phosphate as cofactor.

It carries out the reaction N(2)-succinyl-L-ornithine + 2-oxoglutarate = N-succinyl-L-glutamate 5-semialdehyde + L-glutamate. It functions in the pathway amino-acid degradation; L-arginine degradation via AST pathway; L-glutamate and succinate from L-arginine: step 3/5. Catalyzes the transamination of N(2)-succinylornithine and alpha-ketoglutarate into N(2)-succinylglutamate semialdehyde and glutamate. Can also act as an acetylornithine aminotransferase. The sequence is that of Succinylornithine transaminase from Shigella sonnei (strain Ss046).